Here is an 87-residue protein sequence, read N- to C-terminus: DNA/RNA-binding protein Alba (87 aa).

Lys9 is modified (N6-acetyllysine).

Belongs to the histone-like Alba family. In terms of processing, acetylated. Acetylation at Lys-9 decreases DNA-binding affinity.

It is found in the cytoplasm. Its subcellular location is the chromosome. Its function is as follows. Binds double-stranded DNA tightly but without sequence specificity. Involved in DNA compaction. In Methanocaldococcus jannaschii (strain ATCC 43067 / DSM 2661 / JAL-1 / JCM 10045 / NBRC 100440) (Methanococcus jannaschii), this protein is DNA/RNA-binding protein Alba.